A 482-amino-acid chain; its full sequence is MNAMTNKTLTTAAGAPVADNNNTMTAGPRGPALLQDVWFLEKLAHFDRERIPERVVHAKGSGAYGTFTVTHDISRYTRARIFAEVGKQTPLFLRFSTVAGERGAADAERDVRGFAIKFYTDEGNWDLVGNNTPVFFIRDPLKFPDFIHTQKRDPKTNLRNATAAWDFWSLNPESLHQVTILMSDRGLPQNYRQQHGFGSHTYSFVNDAGERFYVKFHFKSQQGIACYTDGEAAELVGRDRESAQRDLFQNIEQGQFPRWTLKVQVMPEAEAATYHINPFDLTKVWPHADYPLIEVGVLELNKNPENYFAEVEQAAFTPANVVPGIGFSPDKMLQGRLFSYGDTHRYRLGINHHQIPVNAPRCPFHSFHRDGMGRVDGNGGATLNYEPNSFGEWREAKHAAEPPLALDGQAADRWNHRVDEDYYSQPGALFRLMNDDQKQQLFGNIGRHMAGVPEEIQRRQLEHFRRADPAYAAGVAKALGLK.

Residues 1–11 (MNAMTNKTLTT) are compositionally biased toward polar residues. A disordered region spans residues 1 to 21 (MNAMTNKTLTTAAGAPVADNN). Active-site residues include His57 and Asn130. Tyr340 provides a ligand contact to heme.

This sequence belongs to the catalase family. As to quaternary structure, homodimer. Heme is required as a cofactor.

The enzyme catalyses 2 H2O2 = O2 + 2 H2O. In terms of biological role, decomposes hydrogen peroxide into water and oxygen; serves to protect cells from the toxic effects of hydrogen peroxide. The polypeptide is Catalase (katA) (Bordetella bronchiseptica (strain ATCC BAA-588 / NCTC 13252 / RB50) (Alcaligenes bronchisepticus)).